The chain runs to 297 residues: Retroviral cyclin (297 aa).

In terms of domain architecture, Cyclin N-terminal spans 21 to 113 (PVYWKELLNW…KPSLLLTETM (93 aa)). A transcription activation domain region spans residues 21–113 (PVYWKELLNW…KPSLLLTETM (93 aa)). Positions 222-270 (QINLDFAEAEQREAAERRALLEREREQQLQEARERLDDVMAVLEAEVAI) form a coiled coil.

Belongs to the cyclin family. Interacts (via transcription activation domain) with host TAF9 in vitro. Interacts with host CDK3 and CDK8.

The protein resides in the host nucleus. Transforming protein which induces the development of dermal sarcomas. Induces positive and negative regulation of transcription from host and viral promoters by interacting with various cellular factors involved in protein transcription regulation. The protein is Retroviral cyclin (orfA) of Sander vitreus (Walleye).